The sequence spans 110 residues: uncharacterized protein (110 aa).

The next 3 helical transmembrane spans lie at valine 32 to proline 52, tyrosine 57 to isoleucine 77, and phenylalanine 90 to isoleucine 110.

Its subcellular location is the membrane. May play a role in proper chromosome segregation. Suppresses the high-frequency loss of mini-chromosomes when overexpressed, and this suppression is completely dependent on silencing protein SIR4. This is an uncharacterized protein from Saccharomyces cerevisiae (strain ATCC 204508 / S288c) (Baker's yeast).